Here is a 221-residue protein sequence, read N- to C-terminus: Ribosomal RNA small subunit methyltransferase G (221 aa).

S-adenosyl-L-methionine is bound by residues G85, L90, 138–139 (AE), and R151.

It belongs to the methyltransferase superfamily. RNA methyltransferase RsmG family.

Its subcellular location is the cytoplasm. It carries out the reaction guanosine(527) in 16S rRNA + S-adenosyl-L-methionine = N(7)-methylguanosine(527) in 16S rRNA + S-adenosyl-L-homocysteine. Specifically methylates the N7 position of guanine in position 527 of 16S rRNA. This Caulobacter sp. (strain K31) protein is Ribosomal RNA small subunit methyltransferase G.